An 898-amino-acid chain; its full sequence is DNA-directed DNA polymerase (898 aa).

A 3'-5'exonuclease region spans residues 101-337 (YDRKFVRVAN…VQAIDKIRGF (237 aa)). Residues Asp-112, Glu-114, and Asp-219 each coordinate Mg(2+). The tract at residues 245–261 (VKSKLIQNMYGSKEIYS) is beta hairpin. Residues Asp-324, Asp-408, and Leu-409 each coordinate Mg(2+). Residues 377 to 898 (IPQQGSHVKQ…EKASLDFLFG (522 aa)) are polymerase. Residues 411 to 413 (SLY), Arg-479, and Lys-557 contribute to the substrate site. Asp-620 lines the Mg(2+) pocket. The interval 702–705 (KKRY) is binding of DNA in B-conformation. Positions 893–898 (LDFLFG) are interaction with the polymerase clamp.

The protein belongs to the DNA polymerase type-B family. As to quaternary structure, interacts with the polymerase clamp; this interaction constitutes the polymerase holoenzyme. Interacts with the helicase assembly factor. Part of the replicase complex that includes the DNA polymerase, the polymerase clamp, the clamp loader complex, the single-stranded DNA binding protein, the primase, the helicase and the helicase assembly factor. It depends on Mg(2+) as a cofactor.

It catalyses the reaction DNA(n) + a 2'-deoxyribonucleoside 5'-triphosphate = DNA(n+1) + diphosphate. Its function is as follows. Replicates the viral genomic DNA. This polymerase possesses two enzymatic activities: DNA synthesis (polymerase) and an exonucleolytic activity that degrades single-stranded DNA in the 3'- to 5'-direction for proofreading purpose. The polypeptide is DNA-directed DNA polymerase (43) (Enterobacteria phage T4 (Bacteriophage T4)).